The chain runs to 143 residues: MNKTYMANPQNVERKWYVVDAEGKTLGRLASKVAAILRGKHKPTFTPHVDCGDFVIIVNAEKIQVTGKKVTDKVYYRHSGYPGGQKATTFEQMIARRPERVLELAIKGMLPHNRLGRQMYRKLKVYAGPEHPHAAQKPEPLEV.

This sequence belongs to the universal ribosomal protein uL13 family. As to quaternary structure, part of the 50S ribosomal subunit.

This protein is one of the early assembly proteins of the 50S ribosomal subunit, although it is not seen to bind rRNA by itself. It is important during the early stages of 50S assembly. The protein is Large ribosomal subunit protein uL13 of Symbiobacterium thermophilum (strain DSM 24528 / JCM 14929 / IAM 14863 / T).